The sequence spans 441 residues: DNA primase DnaG (441 aa).

The Toprim domain occupies 165-241 (DTIIIVEGRA…DIDYVARAPP (77 aa)). 3 residues coordinate Mg(2+): glutamate 171, aspartate 215, and aspartate 217. Positions 299 to 315 (KEEVAERGEEMESKAEG) are enriched in basic and acidic residues. Positions 299-320 (KEEVAERGEEMESKAEGAEQPT) are disordered.

This sequence belongs to the archaeal DnaG primase family. As to quaternary structure, forms a ternary complex with MCM helicase and DNA. Component of the archaeal exosome complex. The cofactor is Mg(2+).

The enzyme catalyses ssDNA + n NTP = ssDNA/pppN(pN)n-1 hybrid + (n-1) diphosphate.. Functionally, RNA polymerase that catalyzes the synthesis of short RNA molecules used as primers for DNA polymerase during DNA replication. Also part of the exosome, which is a complex involved in RNA degradation. Acts as a poly(A)-binding protein that enhances the interaction between heteromeric, adenine-rich transcripts and the exosome. The protein is DNA primase DnaG of Ignicoccus hospitalis (strain KIN4/I / DSM 18386 / JCM 14125).